Reading from the N-terminus, the 442-residue chain is Xaa-Pro dipeptidase (442 aa).

The Mn(2+) site is built by D245, D256, H338, E383, and E422.

This sequence belongs to the peptidase M24B family. Bacterial-type prolidase subfamily. Mn(2+) serves as cofactor.

It carries out the reaction Xaa-L-Pro dipeptide + H2O = an L-alpha-amino acid + L-proline. Its function is as follows. Splits dipeptides with a prolyl residue in the C-terminal position. This chain is Xaa-Pro dipeptidase, found in Sodalis glossinidius (strain morsitans).